Reading from the N-terminus, the 269-residue chain is 4-hydroxy-tetrahydrodipicolinate reductase (269 aa).

Residues 11–16 and Glu-37 contribute to the NAD(+) site; that span reads GASGRM. Arg-38 is a binding site for NADP(+). NAD(+)-binding positions include 101–103 and 125–128; these read GTT and AGNM. His-158 (proton donor/acceptor) is an active-site residue. Residue His-159 participates in (S)-2,3,4,5-tetrahydrodipicolinate binding. Lys-162 serves as the catalytic Proton donor. 168–169 contributes to the (S)-2,3,4,5-tetrahydrodipicolinate binding site; it reads GT.

It belongs to the DapB family.

It localises to the cytoplasm. It catalyses the reaction (S)-2,3,4,5-tetrahydrodipicolinate + NAD(+) + H2O = (2S,4S)-4-hydroxy-2,3,4,5-tetrahydrodipicolinate + NADH + H(+). The enzyme catalyses (S)-2,3,4,5-tetrahydrodipicolinate + NADP(+) + H2O = (2S,4S)-4-hydroxy-2,3,4,5-tetrahydrodipicolinate + NADPH + H(+). It functions in the pathway amino-acid biosynthesis; L-lysine biosynthesis via DAP pathway; (S)-tetrahydrodipicolinate from L-aspartate: step 4/4. Its function is as follows. Catalyzes the conversion of 4-hydroxy-tetrahydrodipicolinate (HTPA) to tetrahydrodipicolinate. The chain is 4-hydroxy-tetrahydrodipicolinate reductase from Cereibacter sphaeroides (strain ATCC 17029 / ATH 2.4.9) (Rhodobacter sphaeroides).